The sequence spans 155 residues: MVLSGALCFRMKDSALKVLYLHNNQLLAGGLHAGKVIKGEEISVVPNRWLDASLSPVILGVQGGSQCLSCGVGQEPTLTLEPVNIMELYLGAKESKSFTFYRRDMGLTSSFESAAYPGWFLCTVPEADQPVRLTQLPENGGWNAPITDFYFQQCD.

Residues Cys8 and Cys154 are joined by a disulfide bond.

Belongs to the IL-1 family. Interacts with cargo receptor TMED10; the interaction mediates the translocation from the cytoplasm into the ERGIC (endoplasmic reticulum-Golgi intermediate compartment) and thereby secretion. As to expression, predominantly expressed in skin keratinocytes but not in fibroblasts, endothelial cells or melanocytes. Detected also in the spleen, brain leukocyte and macrophage cell types. Increased in lesional psoriasis skin.

The protein resides in the cytoplasm. Its subcellular location is the secreted. Its function is as follows. Inhibits the activity of interleukin-36 (IL36A,IL36B and IL36G) by binding to receptor IL1RL2 and preventing its association with the coreceptor IL1RAP for signaling. Part of the IL-36 signaling system that is thought to be present in epithelial barriers and to take part in local inflammatory response; similar to the IL-1 system with which it shares the coreceptor. Proposed to play a role in skin inflammation. May be involved in the innate immune response to fungal pathogens, such as Aspergillus fumigatus. May activate an anti-inflammatory signaling pathway by recruiting SIGIRR. This Homo sapiens (Human) protein is Interleukin-36 receptor antagonist protein.